We begin with the raw amino-acid sequence, 239 residues long: tRNA (guanine-N(1)-)-methyltransferase (239 aa).

S-adenosyl-L-methionine-binding positions include Gly-113 and 137–142 (LGDYVL).

Belongs to the RNA methyltransferase TrmD family. Homodimer.

Its subcellular location is the cytoplasm. The catalysed reaction is guanosine(37) in tRNA + S-adenosyl-L-methionine = N(1)-methylguanosine(37) in tRNA + S-adenosyl-L-homocysteine + H(+). In terms of biological role, specifically methylates guanosine-37 in various tRNAs. The protein is tRNA (guanine-N(1)-)-methyltransferase of Cutibacterium acnes (strain DSM 16379 / KPA171202) (Propionibacterium acnes).